The primary structure comprises 137 residues: Probable calcium-binding protein CML33 (137 aa).

EF-hand domains follow at residues Met1–Ser36, Ile37–Ser72, Asp76–Lys111, and Cys112–Val137. Ca(2+) contacts are provided by Asp14, Ser16, Asp18, Lys20, and Glu25. Residues Asp89, Asn91, Asp93, Lys95, and Glu100 each contribute to the Ca(2+) site.

Its function is as follows. Potential calcium sensor. This is Probable calcium-binding protein CML33 (CML33) from Arabidopsis thaliana (Mouse-ear cress).